Reading from the N-terminus, the 498-residue chain is Lysine--tRNA ligase (498 aa).

Mg(2+) contacts are provided by glutamate 401 and glutamate 408.

This sequence belongs to the class-II aminoacyl-tRNA synthetase family. In terms of assembly, homodimer. The cofactor is Mg(2+).

It is found in the cytoplasm. The enzyme catalyses tRNA(Lys) + L-lysine + ATP = L-lysyl-tRNA(Lys) + AMP + diphosphate. The polypeptide is Lysine--tRNA ligase (Dehalococcoides mccartyi (strain CBDB1)).